Reading from the N-terminus, the 208-residue chain is Putative vomeronasal receptor-like protein 4 (208 aa).

The Extracellular segment spans residues 1-19; it reads MEMTKLFSYIVIKNVYYPQ. Residues 20-40 form a helical membrane-spanning segment; that stretch reads VSFGISANTFLLLFHIFTFAY. Residues 41-48 lie on the Cytoplasmic side of the membrane; sequence THRLKPID. Residues 49–69 traverse the membrane as a helical segment; the sequence is MTISHLPLIHILLLFTQAILV. Residues 70-97 lie on the Extracellular side of the membrane; sequence SSDLFESWNIQNNDLKCKIITFLNRVMR. A disulfide bridge connects residues cysteine 86 and cysteine 173. Residues 98-118 traverse the membrane as a helical segment; it reads GVSICTTCLLSVLQAITISPS. Over 119–135 the chain is Cytoplasmic; the sequence is TSFLEKFKHISANHTLG. Residues 136–156 traverse the membrane as a helical segment; sequence FILFSWVLNMFITNNLLLFIV. Over 157–183 the chain is Extracellular; that stretch reads PTPNRIGASLLFVTEHCYVLPMSYTHR. A helical transmembrane segment spans residues 184 to 204; it reads SLFFILMVLRDVIFIGLMVLS. Residues 205–208 are Cytoplasmic-facing; that stretch reads SGYG.

This sequence belongs to the G-protein coupled receptor 1 family. Expressed in olfactory nerve.

It is found in the cell membrane. In terms of biological role, putative pheromone receptor. The polypeptide is Putative vomeronasal receptor-like protein 4 (VN1R17P) (Homo sapiens (Human)).